The following is a 1024-amino-acid chain: NLR family CARD domain-containing protein 4 (1024 aa).

Residues 1–88 (MNFIKDNSRA…PLFQDLNGQS (88 aa)) enclose the CARD domain. The tract at residues 95–298 (EGDLDDLAQD…QFGALTAEVG (204 aa)) is nucleotide-binding domain (NBD). Residues 163 to 476 (SPCIIEGESG…VTKGNGYLQK (314 aa)) form the NACHT domain. Residue 169 to 176 (GESGKGKS) coordinates ATP. Residues 356–463 (SHTQTTLFHT…RLSSLLTSHE (108 aa)) are winged-helix domain (WHD). Ser-533 carries the post-translational modification Phosphoserine. LRR repeat units follow at residues 578-598 (FFQG…LFDF), 656-679 (KQEF…DIRY), 735-758 (VTNL…LTDS), 762-785 (LKNL…KLAE), 787-812 (LKNL…DYIV), 824-847 (EIQL…LHNL), 848-870 (VKLS…ALHE), 878-902 (LEQL…LLKH), 911-933 (KLGL…FFGK), 936-963 (LKNF…VFEN), 965-985 (KQLV…ALVR), and 999-1021 (EARL…AFKL).

Homooligomer; homooligomerizes to induce formation of the NLRC4 inflammasome. Homooligomerizes following activation by pathogenic proteins. Component of the NLRC4 inflammasome, at least composed of NLRC4 and caspase-1 (CASP1). Some NLRC4 inflammasomes contain PYCARD/ASC, while some others directly contact and activate CASP1. Interacts (via CARD domain) with PYCARD/ASC, pro-caspase-1 (CASP1), NOD2, BCL10 and NALP1 (NAC) by CARD-CARD interaction. Interacts with EIF2AK2/PKR. Phosphorylated at Ser-533 following infection of macrophages with S.typhimurium (Salmonella). Phosphorylation is essential for NLRC4 inflammasome function to promote caspase-1 activation and pyroptosis. PRKCD phosphorylates Ser-533 in vitro. As to expression, isoform 2 is expressed ubiquitously, although highly expressed in lung and spleen. Isoform 1 is highly expressed in lung, followed by leukocytes especially monocytes, lymph node, colon, brain, prostate, placenta, spleen, bone marrow and fetal liver. Isoform 4 is only detected in brain.

The protein resides in the cytoplasm. It localises to the cytosol. It is found in the inflammasome. Key component of inflammasomes that indirectly senses specific proteins from pathogenic bacteria and fungi and responds by assembling an inflammasome complex that promotes caspase-1 activation, cytokine production and macrophage pyroptosis. The NLRC4 inflammasome is activated as part of the innate immune response to a range of intracellular bacteria. In Homo sapiens (Human), this protein is NLR family CARD domain-containing protein 4 (NLRC4).